A 110-amino-acid chain; its full sequence is Nucleoid-associated protein YpAngola_A2890 (110 aa).

A disordered region spans residues 90–110 (KEKMASVSNGMQLPPGFKMPF).

It belongs to the YbaB/EbfC family. Homodimer.

The protein resides in the cytoplasm. It is found in the nucleoid. In terms of biological role, binds to DNA and alters its conformation. May be involved in regulation of gene expression, nucleoid organization and DNA protection. This Yersinia pestis bv. Antiqua (strain Angola) protein is Nucleoid-associated protein YpAngola_A2890.